We begin with the raw amino-acid sequence, 434 residues long: Trigger factor (434 aa).

One can recognise a PPIase FKBP-type domain in the interval 161–246 (EDRVTVDFSG…LKKVEERELP (86 aa)).

Belongs to the FKBP-type PPIase family. Tig subfamily.

Its subcellular location is the cytoplasm. It catalyses the reaction [protein]-peptidylproline (omega=180) = [protein]-peptidylproline (omega=0). Involved in protein export. Acts as a chaperone by maintaining the newly synthesized protein in an open conformation. Functions as a peptidyl-prolyl cis-trans isomerase. This Serratia proteamaculans (strain 568) protein is Trigger factor.